The following is a 157-amino-acid chain: Rieske domain-containing protein (157 aa).

Methionine 1 carries the post-translational modification N-acetylmethionine. Serine 6 carries the post-translational modification Phosphoserine. 2 consecutive Rieske domains span residues 16 to 94 (SSVC…TGEG) and 17 to 131 (SVCV…NIYV). [2Fe-2S] cluster-binding residues include cysteine 57, histidine 59, cysteine 80, and histidine 83.

[2Fe-2S] cluster serves as cofactor.

This chain is Rieske domain-containing protein (RFESD), found in Homo sapiens (Human).